Here is a 695-residue protein sequence, read N- to C-terminus: Elongation factor G 1 (695 aa).

Positions 5 to 280 (ARYRNIGIFA…AVVDYLPSPT (276 aa)) constitute a tr-type G domain. Residues 14-21 (AHVDAGKT), 78-82 (DTPGH), and 132-135 (NKLD) contribute to the GTP site.

It belongs to the TRAFAC class translation factor GTPase superfamily. Classic translation factor GTPase family. EF-G/EF-2 subfamily.

It localises to the cytoplasm. Catalyzes the GTP-dependent ribosomal translocation step during translation elongation. During this step, the ribosome changes from the pre-translocational (PRE) to the post-translocational (POST) state as the newly formed A-site-bound peptidyl-tRNA and P-site-bound deacylated tRNA move to the P and E sites, respectively. Catalyzes the coordinated movement of the two tRNA molecules, the mRNA and conformational changes in the ribosome. This is Elongation factor G 1 from Pseudoalteromonas atlantica (strain T6c / ATCC BAA-1087).